Consider the following 121-residue polypeptide: Large ribosomal subunit protein bL19 (121 aa).

The protein belongs to the bacterial ribosomal protein bL19 family.

This protein is located at the 30S-50S ribosomal subunit interface and may play a role in the structure and function of the aminoacyl-tRNA binding site. This chain is Large ribosomal subunit protein bL19, found in Borreliella burgdorferi (strain ZS7) (Borrelia burgdorferi).